The following is a 522-amino-acid chain: GMP synthase [glutamine-hydrolyzing] (522 aa).

The Glutamine amidotransferase type-1 domain occupies 9–204 (KILILDFGAQ…VVDICGCQML (196 aa)). Cys86 acts as the Nucleophile in catalysis. Residues His178 and Glu180 contribute to the active site. In terms of domain architecture, GMPS ATP-PPase spans 205-397 (WTAANIIEDQ…LGLPHAMVYR (193 aa)). Position 232 to 238 (232 to 238 (SGGVDSS)) interacts with ATP.

As to quaternary structure, homodimer.

The catalysed reaction is XMP + L-glutamine + ATP + H2O = GMP + L-glutamate + AMP + diphosphate + 2 H(+). The protein operates within purine metabolism; GMP biosynthesis; GMP from XMP (L-Gln route): step 1/1. Its function is as follows. Catalyzes the synthesis of GMP from XMP. In Xylella fastidiosa (strain 9a5c), this protein is GMP synthase [glutamine-hydrolyzing] (guaA).